Consider the following 318-residue polypeptide: Beta-sarcoglycan (318 aa).

The disordered stretch occupies residues 1 to 32 (MAAAAAAAAEQQSSNGPVKKSMREKAVERRSV). Residues 1–65 (MAAAAAAAAE…GLRGRKGNLA (65 aa)) lie on the Cytoplasmic side of the membrane. Residues 21-32 (SMREKAVERRSV) show a composition bias toward basic and acidic residues. A helical; Signal-anchor for type II membrane protein transmembrane segment spans residues 66–86 (ICVIILLFILAVINLIITLVI). At 87–318 (WAVIRIGPNG…ISDNPCGNTH (232 aa)) the chain is on the extracellular side. N-linked (GlcNAc...) asparagine glycans are attached at residues asparagine 158, asparagine 211, and asparagine 258. Cystine bridges form between cysteine 288–cysteine 314 and cysteine 290–cysteine 307.

This sequence belongs to the sarcoglycan beta/delta/gamma/zeta family. As to quaternary structure, cross-link to form 2 major subcomplexes: one consisting of SGCB, SGCD and SGCG and the other consisting of SGCB and SGCD. The association between SGCB and SGCG is particularly strong while SGCA is loosely associated with the other sarcoglycans. Disulfide bonds are present. Highest expression in heart and skeletal muscle. Low expression in brain, kidney, placenta, pancreas and lung. High expression in fetal brain. Also found in fetal lung, kidney and liver.

The protein resides in the cell membrane. Its subcellular location is the sarcolemma. It localises to the cytoplasm. The protein localises to the cytoskeleton. Its function is as follows. Component of the sarcoglycan complex, a subcomplex of the dystrophin-glycoprotein complex which forms a link between the F-actin cytoskeleton and the extracellular matrix. The sequence is that of Beta-sarcoglycan (SGCB) from Homo sapiens (Human).